The chain runs to 565 residues: MQEDVYRSGIRKNLNRILQELTDDGKLDFESVPYQNLKAEIEKRDEECTEVLCKVLLETASRSGCADRQFVLQLFNEYFCNSSLFRDQILNDPKEFIEIMLETDPIRNPLPGSKSEGNELKSKSLAFIKNWEKMYAKNDARMKCLAVTLRKTKFVDYENGEKKIEEERKRREFLDERRRMIVERTLSLYKSKFEEIKEDVERLKMELETTMEMLVPSFTNSDDVDIPMDIPSTSSKSFELVIEDLSPLIKVNADNDAIVEAFLGAKTVLIHRVQTMRKLAKGLLPLKGAGESLAQSIIDYRDVIKKLVLKADEIRIKTKKKPVQKAKKFDDDFIDVEISIDDILMVQYANEASEDVKEDVKEPEKKLANPKKEEPKVKFVSFGLDLKYWGEERKDVEVPKNNADCHRFWRSADESTVAGTVHDTVYTQRQFTFVGEAPKIDRECLAKLPSGALCKRKDMFKCPLHGPLVDRDANGKPVKDEDRLKEIDRKERKRLKEAEEFSRKIVKEYESKTKRKRKHEEETSVRSRLQKKLFDPKTIQRVSADITSQQRSRLEKNFSHQFSHL.

A VHS-like region spans residues 11-156; that stretch reads RKNLNRILQE…VTLRKTKFVD (146 aa). Positions 155–215 form a coiled coil; sequence VDYENGEKKI…ELETTMEMLV (61 aa). Residues 441–468 form a UVSSA-type zinc finger; that stretch reads DRECLAKLPSGALCKRKDMFKCPLHGPL. C444, C454, C462, and H465 together coordinate Zn(2+). Residues 480–510 adopt a coiled-coil conformation; sequence DEDRLKEIDRKERKRLKEAEEFSRKIVKEYE. Disordered stretches follow at residues 510-530 and 542-565; these read ESKT…SRLQ and VSAD…FSHL.

It belongs to the UVSSA family.

The protein localises to the chromosome. Its function is as follows. Factor involved in transcription-coupled nucleotide excision repair (TC-NER) in response to UV damage. TC-NER allows RNA polymerase II-blocking lesions to be rapidly removed from the transcribed strand of active genes. The sequence is that of UV-stimulated scaffold protein A homolog from Caenorhabditis briggsae.